The chain runs to 273 residues: Undecaprenyl-diphosphatase (273 aa).

The next 6 membrane-spanning stretches (helical) occupy residues 43 to 63 (IGNVFEVVIQLGAILAVCWEY), 82 to 102 (KFVLNLLIAFLPAAIVGVLLI), 109 to 129 (LFNPVAVACALVVGGLVILWA), 185 to 205 (TEFSFFLAIPIMFAATAYDVL), 214 to 234 (ADLPTFGTGFLFAFLSAFVAV), and 249 to 269 (FAWYRIVFGLIILGSWWLGWI).

Belongs to the UppP family.

It localises to the cell inner membrane. It catalyses the reaction di-trans,octa-cis-undecaprenyl diphosphate + H2O = di-trans,octa-cis-undecaprenyl phosphate + phosphate + H(+). Catalyzes the dephosphorylation of undecaprenyl diphosphate (UPP). Confers resistance to bacitracin. The protein is Undecaprenyl-diphosphatase of Laribacter hongkongensis (strain HLHK9).